Reading from the N-terminus, the 114-residue chain is Transcription initiation factor IIA subunit 2 (114 aa).

Belongs to the TFIIA subunit 2 family. As to quaternary structure, TFIIA is a heterodimer composed of the large toa1 and the small toa2 subunits.

It is found in the nucleus. In terms of biological role, TFIIA is a component of the transcription machinery of RNA polymerase II and plays an important role in transcriptional activation. TFIIA in a complex with tbp mediates transcriptional activity. The polypeptide is Transcription initiation factor IIA subunit 2 (toa2) (Fusarium vanettenii (strain ATCC MYA-4622 / CBS 123669 / FGSC 9596 / NRRL 45880 / 77-13-4) (Fusarium solani subsp. pisi)).